The chain runs to 448 residues: Cyclic dof factor 3 (448 aa).

The segment at 26–108 (AVTVEDDEED…DGKTLKKPTK (83 aa)) is disordered. Over residues 29-39 (VEDDEEDDWSG) the composition is skewed to acidic residues. Residues 40–54 (GDDKSPEKVTPELSD) show a composition bias toward basic and acidic residues. The span at 55–69 (KNNNNCNDNSFNNSK) shows a compositional bias: low complexity. Residues 80-99 (STDQIESSDTPEDNQQTTPD) are compositionally biased toward polar residues. The Dof-type zinc finger occupies 110-164 (LPCPRCKSMETKFCYYNNYNINQPRHFCKACQRYWTAGGTMRNVPVGAGRRKNKS). Zn(2+) contacts are provided by C112, C115, C137, and C140. Disordered regions lie at residues 243 to 269 (NGDD…AQSG) and 332 to 370 (SSSP…KQKA). Composition is skewed to polar residues over residues 246 to 259 (DCSS…SNNH) and 332 to 347 (SSSP…NSPT). Basic and acidic residues predominate over residues 351–368 (HPRDEGSSKKDNETERKQ).

As to quaternary structure, interacts with ADO2 (via kelch repeats) and ADO3 (via kelch repeats). Expressed in the vasculature of cotyledons and hypocotyls, leaves and roots.

The protein localises to the nucleus. In terms of biological role, transcription factor that binds specifically to a 5'-AA[AG]G-3' consensus core sequence. Regulates a photoperiodic flowering response. Transcriptional repressor of 'CONSTANS' expression. The polypeptide is Cyclic dof factor 3 (CDF3) (Arabidopsis thaliana (Mouse-ear cress)).